A 521-amino-acid chain; its full sequence is Tetratricopeptide repeat and J domain-containing co-chaperone DNJ1 (521 aa).

An N-terminal signal peptide occupies residues 1–21 (MHLNLAGLAVAATAFLATASA). TPR repeat units follow at residues 33–66 (VSNLLTKAQTHLSRGETNEALVYYDAAIARDPTN), 67–100 (YLSLFKRATAYLSLGRTSQATEDFNKVLSLKPGF), 102–134 (GAHLQLARLRAKAGDWDAAKAQYGLAGKAPKSA), 176–209 (PHLRELRAHCRFELGDVELALSDLQHVLHMKPGD), 211–244 (SPHIVISATSFYALGDLENGIGQVKKCLQSDPDS), 315–348 (LENLIEMTCQAYTESSHKEAAKYCDESLQLNPDS), and 349–382 (FWGLLHKGKAQLKSELYDAAIATLEKAAEIRPDQ). In terms of domain architecture, J spans 404–473 (DYYKVLGVEN…ELRARFDRGD (70 aa)). The span at 464 to 474 (ELRARFDRGDD) shows a compositional bias: basic and acidic residues. Residues 464–521 (ELRARFDRGDDPNSQERPNPFQGQGNPFGGGHPFMFQQGGGGGGPNIKFQFGGQPFGF) are disordered. Over residues 489-508 (NPFGGGHPFMFQQGGGGGGP) the composition is skewed to gly residues. Residues 509-521 (NIKFQFGGQPFGF) are compositionally biased toward low complexity.

It localises to the endoplasmic reticulum lumen. Functionally, endoplasmic reticulum co-chaperone required for the of virulence factors such as PG1, the major endopolygalacturonase produced during the infection of tomato plants. This is Tetratricopeptide repeat and J domain-containing co-chaperone DNJ1 from Fusarium oxysporum f. sp. lycopersici (strain 4287 / CBS 123668 / FGSC 9935 / NRRL 34936) (Fusarium vascular wilt of tomato).